Reading from the N-terminus, the 184-residue chain is Uroplakin-2 (184 aa).

Positions 1-25 (MAPLLPIRTLPLILILLALLSPGAA) are cleaved as a signal peptide. The propeptide occupies 26–84 (DFNISSLSGLLSPALTESLLVALPPCHLTGGNATLMVRRANDSKVVTSSFVVPPCRGRR). Residues asparagine 28, asparagine 57, and asparagine 66 are each glycosylated (N-linked (GlcNAc...) asparagine). Residues 85 to 155 (ELVSVVDSGA…IGLGMARTGG (71 aa)) are Lumenal-facing. The helical transmembrane segment at 156 to 176 (MVVITVLLSVAMFLLVLGFII) threads the bilayer. Over 177–184 (ALALGSRK) the chain is Cytoplasmic.

It belongs to the uroplakin-2 family. As to quaternary structure, interacts with uroplakin-1a (UPK1A). In terms of tissue distribution, expressed in ureter.

Its subcellular location is the cell membrane. Its function is as follows. Component of the asymmetric unit membrane (AUM); a highly specialized biomembrane elaborated by terminally differentiated urothelial cells. May play an important role in regulating the assembly of the AUM. This Homo sapiens (Human) protein is Uroplakin-2 (UPK2).